Consider the following 366-residue polypeptide: Ribosomal RNA large subunit methyltransferase M (366 aa).

Residues Ser-188, 221-224, Asp-240, Asp-260, and Asp-277 contribute to the S-adenosyl-L-methionine site; that span reads CPGG. Lys-306 functions as the Proton acceptor in the catalytic mechanism.

This sequence belongs to the class I-like SAM-binding methyltransferase superfamily. RNA methyltransferase RlmE family. RlmM subfamily. As to quaternary structure, monomer.

The protein resides in the cytoplasm. The catalysed reaction is cytidine(2498) in 23S rRNA + S-adenosyl-L-methionine = 2'-O-methylcytidine(2498) in 23S rRNA + S-adenosyl-L-homocysteine + H(+). Functionally, catalyzes the 2'-O-methylation at nucleotide C2498 in 23S rRNA. The sequence is that of Ribosomal RNA large subunit methyltransferase M from Shigella flexneri serotype 5b (strain 8401).